Consider the following 355-residue polypeptide: Phosphoribosylformylglycinamidine cyclo-ligase (355 aa).

This sequence belongs to the AIR synthase family.

The protein localises to the cytoplasm. It catalyses the reaction 2-formamido-N(1)-(5-O-phospho-beta-D-ribosyl)acetamidine + ATP = 5-amino-1-(5-phospho-beta-D-ribosyl)imidazole + ADP + phosphate + H(+). The protein operates within purine metabolism; IMP biosynthesis via de novo pathway; 5-amino-1-(5-phospho-D-ribosyl)imidazole from N(2)-formyl-N(1)-(5-phospho-D-ribosyl)glycinamide: step 2/2. The protein is Phosphoribosylformylglycinamidine cyclo-ligase of Paraburkholderia phytofirmans (strain DSM 17436 / LMG 22146 / PsJN) (Burkholderia phytofirmans).